The sequence spans 86 residues: Large ribosomal subunit protein bL31 (86 aa).

The disordered stretch occupies residues 65–86; sequence YGMGSANSATSKEQKEEKDSKK. A compositionally biased stretch (basic and acidic residues) spans 76-86; it reads KEQKEEKDSKK.

It belongs to the bacterial ribosomal protein bL31 family. Type A subfamily. Part of the 50S ribosomal subunit.

In terms of biological role, binds the 23S rRNA. The polypeptide is Large ribosomal subunit protein bL31 (Prochlorococcus marinus (strain AS9601)).